The primary structure comprises 2939 residues: Serine/threonine-protein kinase tel1 (2939 aa).

3 disordered regions span residues 193–212 (GTSVRASPAPGTPATSRAGS), 695–718 (PPEDSHKATSTDQPKREEIRAADS), and 859–886 (KTRRESPTDSDPASMDLDDEFDSQETRK). Residues 697-715 (EDSHKATSTDQPKREEIRA) show a composition bias toward basic and acidic residues. In terms of domain architecture, FAT spans 1869–2471 (IAAAAATRCG…MYQIWSGVKA (603 aa)). The region spanning 2577–2890 (FEPQMSIASG…DKKSTKNLNE (314 aa)) is the PI3K/PI4K catalytic domain. Residues 2583 to 2589 (IASGVSA) form a G-loop region. The catalytic loop stretch occupies residues 2755–2763 (GLGDRHGHN). The segment at 2775 to 2799 (HIDLGVAFELGRILPVPELVPFRLT) is activation loop. The tract at residues 2869 to 2894 (DVVEAEDERRAGDKKSTKNLNEPSEA) is disordered. The span at 2875-2884 (DERRAGDKKS) shows a compositional bias: basic and acidic residues. Positions 2907 to 2939 (KTLSVMATVNDLINQATDERNLAVLFCGWAAYA) constitute an FATC domain.

It belongs to the PI3/PI4-kinase family. ATM subfamily. As to quaternary structure, associates with DNA double-strand breaks.

Its subcellular location is the nucleus. It localises to the chromosome. The protein resides in the telomere. It catalyses the reaction L-seryl-[protein] + ATP = O-phospho-L-seryl-[protein] + ADP + H(+). The catalysed reaction is L-threonyl-[protein] + ATP = O-phospho-L-threonyl-[protein] + ADP + H(+). In terms of biological role, serine/threonine protein kinase which activates checkpoint signaling upon genotoxic stresses such as ionizing radiation (IR), ultraviolet light (UV), or DNA replication stalling, thereby acting as a DNA damage sensor. Recognizes the substrate consensus sequence [ST]-Q. Phosphorylates histone H2A to form H2AS128ph (gamma-H2A) at sites of DNA damage, involved in the regulation of DNA damage response mechanism. Required for the control of telomere length and genome stability. In Neurospora crassa (strain ATCC 24698 / 74-OR23-1A / CBS 708.71 / DSM 1257 / FGSC 987), this protein is Serine/threonine-protein kinase tel1 (mus-21).